Here is a 398-residue protein sequence, read N- to C-terminus: Lipase member N (398 aa).

The first 18 residues, 1-18 (MMWLLLTTTCLICGTLNA), serve as a signal peptide directing secretion. Residues 79–379 (PVVYMQHALF…DWNHFDFVWG (301 aa)) form the AB hydrolase-1 domain. Serine 173 serves as the catalytic Nucleophile. A disulfide bond links cysteine 247 and cysteine 256. Asparagine 272 carries an N-linked (GlcNAc...) asparagine glycan. Catalysis depends on charge relay system residues aspartate 344 and histidine 373.

Belongs to the AB hydrolase superfamily. Lipase family. As to expression, highly expressed in the epidermis in the granular keratinocytes. Also detected in other tissues, although at much lower levels, including lung and spleen.

The protein localises to the secreted. The catalysed reaction is a sterol ester + H2O = a sterol + a fatty acid + H(+). It carries out the reaction a triacylglycerol + H2O = a 1,2-diacylglycerol + a fatty acid + H(+). It catalyses the reaction a triacylglycerol + H2O = a diacylglycerol + a fatty acid + H(+). The enzyme catalyses a cholesterol ester + H2O = cholesterol + a fatty acid + H(+). In terms of biological role, plays a highly specific role in the last step of keratinocyte differentiation. Contains two distinct domains: the alpha/beta hydrolase fold and the abhydrolase-associated lipase region, also features the consensus sequence of the active site of a genuine lipase. May have an essential function in lipid metabolism of the most differentiated epidermal layers. This is Lipase member N (LIPN) from Homo sapiens (Human).